We begin with the raw amino-acid sequence, 396 residues long: NADH-quinone oxidoreductase subunit D (396 aa).

Belongs to the complex I 49 kDa subunit family. NDH-1 is composed of 14 different subunits. Subunits NuoB, C, D, E, F, and G constitute the peripheral sector of the complex.

Its subcellular location is the cell inner membrane. The catalysed reaction is a quinone + NADH + 5 H(+)(in) = a quinol + NAD(+) + 4 H(+)(out). In terms of biological role, NDH-1 shuttles electrons from NADH, via FMN and iron-sulfur (Fe-S) centers, to quinones in the respiratory chain. The immediate electron acceptor for the enzyme in this species is believed to be ubiquinone. Couples the redox reaction to proton translocation (for every two electrons transferred, four hydrogen ions are translocated across the cytoplasmic membrane), and thus conserves the redox energy in a proton gradient. This Bartonella quintana (strain Toulouse) (Rochalimaea quintana) protein is NADH-quinone oxidoreductase subunit D.